Reading from the N-terminus, the 425-residue chain is Serine--tRNA ligase (425 aa).

Residue 233–235 (TAE) participates in L-serine binding. Position 264–266 (264–266 (RAE)) interacts with ATP. E287 lines the L-serine pocket. 351-354 (EISS) is an ATP binding site. L-serine is bound at residue S387.

The protein belongs to the class-II aminoacyl-tRNA synthetase family. Type-1 seryl-tRNA synthetase subfamily. As to quaternary structure, homodimer. The tRNA molecule binds across the dimer.

It is found in the cytoplasm. The enzyme catalyses tRNA(Ser) + L-serine + ATP = L-seryl-tRNA(Ser) + AMP + diphosphate + H(+). It catalyses the reaction tRNA(Sec) + L-serine + ATP = L-seryl-tRNA(Sec) + AMP + diphosphate + H(+). It functions in the pathway aminoacyl-tRNA biosynthesis; selenocysteinyl-tRNA(Sec) biosynthesis; L-seryl-tRNA(Sec) from L-serine and tRNA(Sec): step 1/1. Its function is as follows. Catalyzes the attachment of serine to tRNA(Ser). Is also able to aminoacylate tRNA(Sec) with serine, to form the misacylated tRNA L-seryl-tRNA(Sec), which will be further converted into selenocysteinyl-tRNA(Sec). This Clostridium perfringens (strain 13 / Type A) protein is Serine--tRNA ligase.